A 1374-amino-acid chain; its full sequence is Probable ATP-dependent RNA helicase spindle-E (1374 aa).

The region spanning 46–212 (LARIRENPVI…FKTPKKVGYL (167 aa)) is the Helicase ATP-binding domain. 59 to 66 (GPTGCGKT) contributes to the ATP binding site. A DEAH box motif is present at residues 158-161 (DEIH). The Helicase C-terminal domain maps to 265–447 (VCDRLIENMH…NVILKAKLLE (183 aa)). Positions 866–931 (QFAVGQMVAA…RKLDGPLAYM (66 aa)) constitute a Tudor domain.

It belongs to the DEAD box helicase family. DEAH subfamily.

It localises to the cytoplasm. It carries out the reaction ATP + H2O = ADP + phosphate + H(+). Probable ATP-binding RNA helicase which plays a central role during gametogenesis by repressing transposable elements and preventing their mobilization, which is essential for the germline integrity. Acts via the piRNA metabolic process, which mediates the repression of transposable elements during meiosis by forming complexes composed of piRNAs and Piwi proteins and govern the methylation and subsequent repression of transposons. In Aedes aegypti (Yellowfever mosquito), this protein is Probable ATP-dependent RNA helicase spindle-E (spn-E).